The chain runs to 595 residues: Actin-histidine N-methyltransferase (595 aa).

The interval 1 to 22 is disordered; sequence MGKKSRVKTQKSGTGATATVSP. The span at 10 to 20 shows a compositional bias: polar residues; that stretch reads QKSGTGATATV. S-adenosyl-L-methionine contacts are provided by residues Arg-75, 104-106, Arg-254, 275-279, and 325-327; these read EGF, DMCNH, and SGF. Residues 94-314 form the SET domain; it reads EGFEMVNFKE…AGEQIYIFYG (221 aa). Residue Ser-513 is modified to Phosphoserine. The segment covering 549–573 has biased composition (polar residues); the sequence is ENGLVNGENSIPNGTRSENENLNQE. The disordered stretch occupies residues 549–595; that stretch reads ENGLVNGENSIPNGTRSENENLNQEGSKRAVEDAKGSSSDSTDEVKE. The segment covering 574–583 has biased composition (basic and acidic residues); the sequence is GSKRAVEDAK.

It belongs to the class V-like SAM-binding methyltransferase superfamily. SETD3 actin-histidine methyltransferase family. Interacts with MYOD1. In terms of processing, phosphorylated by GSK3B, which is required for recognition by the SCF(FBXW7) complex and subsequent degradation. Post-translationally, ubiquitinated by the SCF(FBXW7) complex following phosphorylation by GSK3B, leading to its degradation by the proteasome.

Its subcellular location is the cytoplasm. It localises to the nucleus. It catalyses the reaction L-histidyl-[protein] + S-adenosyl-L-methionine = N(tele)-methyl-L-histidyl-[protein] + S-adenosyl-L-homocysteine + H(+). Functionally, protein-histidine N-methyltransferase that specifically mediates 3-methylhistidine (tele-methylhistidine) methylation of actin at 'His-73'. Histidine methylation of actin is required for smooth muscle contraction of the laboring uterus during delivery. Does not have protein-lysine N-methyltransferase activity and probably only catalyzes histidine methylation of actin. This chain is Actin-histidine N-methyltransferase, found in Plecturocebus moloch (Dusky titi monkey).